The sequence spans 352 residues: MSIQTDDFSEQRVIAATPASANEEAIERALRPKQLDEYVGQEKIRGQLEIFITAARQRREALDHTLLFGPPGLGKTTLAHIIAREMGVNLRQTSGPVLERAGDLAALLTNLEANDVLFIDEIHRLSPVVEEILYPALEDYQIDIMIGEGPAARSVRLDLQPFTLVGATTRAGMLTNPLRDRFGIVARLEFYTPLELTRIVTRSSSLLNAPIDEDGAFEIAKRSRGTPRIANRLLRRVRDYAEVKGNGDITKAMADAALVMLDVDPVGFDVMDRKLLEAVLFKFNGGPVGLDNLAAAIGEERDTIEDVLEPYLIQQGFLQRTPRGRIATPVAYAHFGVTAPQTGPNGELWGGQ.

A large ATPase domain (RuvB-L) region spans residues 5–191; sequence TDDFSEQRVI…FGIVARLEFY (187 aa). ATP-binding positions include leucine 30, arginine 31, glycine 72, lysine 75, threonine 76, threonine 77, 138–140, arginine 181, tyrosine 191, and arginine 228; that span reads EDY. A Mg(2+)-binding site is contributed by threonine 76. The tract at residues 192–262 is small ATPAse domain (RuvB-S); sequence TPLELTRIVT…MADAALVMLD (71 aa). Residues 265-352 are head domain (RuvB-H); that stretch reads PVGFDVMDRK…GPNGELWGGQ (88 aa). DNA-binding residues include arginine 301, arginine 320, and arginine 325.

This sequence belongs to the RuvB family. In terms of assembly, homohexamer. Forms an RuvA(8)-RuvB(12)-Holliday junction (HJ) complex. HJ DNA is sandwiched between 2 RuvA tetramers; dsDNA enters through RuvA and exits via RuvB. An RuvB hexamer assembles on each DNA strand where it exits the tetramer. Each RuvB hexamer is contacted by two RuvA subunits (via domain III) on 2 adjacent RuvB subunits; this complex drives branch migration. In the full resolvosome a probable DNA-RuvA(4)-RuvB(12)-RuvC(2) complex forms which resolves the HJ.

It localises to the cytoplasm. It catalyses the reaction ATP + H2O = ADP + phosphate + H(+). The RuvA-RuvB-RuvC complex processes Holliday junction (HJ) DNA during genetic recombination and DNA repair, while the RuvA-RuvB complex plays an important role in the rescue of blocked DNA replication forks via replication fork reversal (RFR). RuvA specifically binds to HJ cruciform DNA, conferring on it an open structure. The RuvB hexamer acts as an ATP-dependent pump, pulling dsDNA into and through the RuvAB complex. RuvB forms 2 homohexamers on either side of HJ DNA bound by 1 or 2 RuvA tetramers; 4 subunits per hexamer contact DNA at a time. Coordinated motions by a converter formed by DNA-disengaged RuvB subunits stimulates ATP hydrolysis and nucleotide exchange. Immobilization of the converter enables RuvB to convert the ATP-contained energy into a lever motion, pulling 2 nucleotides of DNA out of the RuvA tetramer per ATP hydrolyzed, thus driving DNA branch migration. The RuvB motors rotate together with the DNA substrate, which together with the progressing nucleotide cycle form the mechanistic basis for DNA recombination by continuous HJ branch migration. Branch migration allows RuvC to scan DNA until it finds its consensus sequence, where it cleaves and resolves cruciform DNA. This Herminiimonas arsenicoxydans protein is Holliday junction branch migration complex subunit RuvB.